The chain runs to 49 residues: Large ribosomal subunit protein bL33B (49 aa).

It belongs to the bacterial ribosomal protein bL33 family.

The protein is Large ribosomal subunit protein bL33B of Acholeplasma laidlawii (strain PG-8A).